Reading from the N-terminus, the 227-residue chain is tRNA (guanine-N(1)-)-methyltransferase (227 aa).

S-adenosyl-L-methionine-binding positions include G107 and 127–132; that span reads LGDFIL.

Belongs to the RNA methyltransferase TrmD family. In terms of assembly, homodimer.

It is found in the cytoplasm. It carries out the reaction guanosine(37) in tRNA + S-adenosyl-L-methionine = N(1)-methylguanosine(37) in tRNA + S-adenosyl-L-homocysteine + H(+). Specifically methylates guanosine-37 in various tRNAs. The sequence is that of tRNA (guanine-N(1)-)-methyltransferase from Mesomycoplasma hyopneumoniae (strain 7448) (Mycoplasma hyopneumoniae).